Reading from the N-terminus, the 1294-residue chain is ATPase PglY (1294 aa).

A disordered region spans residues 1205–1263 (TQAAATPPPAPAASQPTAGDLSLDTPTSDPRIPYTSQETPTSSGGAGTARTSGGRRTTA). Polar residues predominate over residues 1228–1244 (DTPTSDPRIPYTSQETP). The span at 1252-1263 (TARTSGGRRTTA) shows a compositional bias: low complexity.

In terms of biological role, BREX systems (bacteriophage exclusion) provide immunity against bacteriophage. Part of a type 2 BREX system. Previously called the phage growth limitation (Pgl) system, it confers protection against bacteriophage phiC31. The bacteria allows one cycle of phage infection, but subsequent cycles are impaired, protecting the original bacterial colony. The system undergoes high rates (10(-3) to 10(-4)) of phase reversion, i.e. loss and regain of phiC31 resistance. When the pglW-pglX-pglY-pglZ genes are transformed into a susceptible S.lividans (strain 1326) they confer resistance to infection by phage phiC31 and phiBT1; all 4 genes are necessary. Its function is as follows. Hydrolyzes ATP but not AMP, ADP, GMP, GDP or GTP; activity is inhibited by the non-hydrolyzable ATP analog 5-adenylyl beta,gamma-imidodiphosphate. The polypeptide is ATPase PglY (Streptomyces coelicolor (strain ATCC BAA-471 / A3(2) / M145)).